The following is a 557-amino-acid chain: Cytochrome P450 734A2 (557 aa).

A helical transmembrane segment spans residues 13–35 (WATWRVAAVAAAAAVWVTMHVAA). Cys495 is a binding site for heme.

The protein belongs to the cytochrome P450 family. Requires heme as cofactor. In terms of tissue distribution, expressed in roots, shoot apex, leaf sheaths and leaf blades.

Its subcellular location is the membrane. Cytochrome P450 involved in brassinosteroids (BRs) inactivation and regulation of BRs homeostasis. Is a multifunctional and multisubstrate enzyme that controls the endogenous bioactive BR content both by direct inactivation of castasterone (CS) and by decreasing the levels of BR precursors. Catalyzes the oxidation of carbon 22 hydroxylated BR intermediates to produce C26 oxidized metabolites. In Oryza sativa subsp. japonica (Rice), this protein is Cytochrome P450 734A2 (CYP734A2).